Consider the following 425-residue polypeptide: Aspartic protease 2 (425 aa).

A signal peptide spans 1–16; sequence MRSILVLVALIGCIAA. The Peptidase A1 domain maps to 72–421; the sequence is YLGEITIGTP…DIEKKRIGFA (350 aa). Residue Asp90 is part of the active site. Cys103 and Cys145 are joined by a disulfide. 3 N-linked (GlcNAc...) asparagine glycosylation sites follow: Asn163, Asn197, and Asn304. Asp316 is an active-site residue. Cysteines 351 and 382 form a disulfide. Residues Asn354 and Asn365 are each glycosylated (N-linked (GlcNAc...) asparagine).

The protein belongs to the peptidase A1 family. In terms of processing, cleaved into a mature form. Expressed in intestine, amphidal glands and excretory gland (at protein level).

The protein resides in the secreted. Its activity is regulated as follows. Inhibited by pepstatin A. Aspartic protease which cleaves several human serum proteins including hemoglobin, fibrinogen and albumin. Appears to cleave preferentially between P1 (Ala, Leu, Val, Phe and Gly) and P1' (Ala and Leu) residues. This Necator americanus (Human hookworm) protein is Aspartic protease 2.